A 483-amino-acid chain; its full sequence is Siroheme synthase (483 aa).

The interval 1-203 (MNYFPIFANL…RQNTLAEREL (203 aa)) is precorrin-2 dehydrogenase /sirohydrochlorin ferrochelatase. NAD(+) contacts are provided by residues 22–23 (AV) and 43–44 (KH). Ser128 carries the post-translational modification Phosphoserine. The interval 217–483 (GSVSLVGAGP…GGLNAGQRAA (267 aa)) is uroporphyrinogen-III C-methyltransferase. An S-adenosyl-L-methionine-binding site is contributed by Pro226. The active-site Proton acceptor is the Asp249. Lys271 serves as the catalytic Proton donor. S-adenosyl-L-methionine is bound by residues 302–304 (GGD), Val307, 332–333 (TA), Met384, and Gly413.

This sequence in the N-terminal section; belongs to the precorrin-2 dehydrogenase / sirohydrochlorin ferrochelatase family. It in the C-terminal section; belongs to the precorrin methyltransferase family.

The catalysed reaction is uroporphyrinogen III + 2 S-adenosyl-L-methionine = precorrin-2 + 2 S-adenosyl-L-homocysteine + H(+). The enzyme catalyses precorrin-2 + NAD(+) = sirohydrochlorin + NADH + 2 H(+). It catalyses the reaction siroheme + 2 H(+) = sirohydrochlorin + Fe(2+). It functions in the pathway cofactor biosynthesis; adenosylcobalamin biosynthesis; precorrin-2 from uroporphyrinogen III: step 1/1. It participates in cofactor biosynthesis; adenosylcobalamin biosynthesis; sirohydrochlorin from precorrin-2: step 1/1. Its pathway is porphyrin-containing compound metabolism; siroheme biosynthesis; precorrin-2 from uroporphyrinogen III: step 1/1. The protein operates within porphyrin-containing compound metabolism; siroheme biosynthesis; siroheme from sirohydrochlorin: step 1/1. It functions in the pathway porphyrin-containing compound metabolism; siroheme biosynthesis; sirohydrochlorin from precorrin-2: step 1/1. Its function is as follows. Multifunctional enzyme that catalyzes the SAM-dependent methylations of uroporphyrinogen III at position C-2 and C-7 to form precorrin-2 via precorrin-1. Then it catalyzes the NAD-dependent ring dehydrogenation of precorrin-2 to yield sirohydrochlorin. Finally, it catalyzes the ferrochelation of sirohydrochlorin to yield siroheme. The sequence is that of Siroheme synthase from Neisseria meningitidis serogroup B (strain ATCC BAA-335 / MC58).